We begin with the raw amino-acid sequence, 176 residues long: Peptide deformylase 2 (176 aa).

The Fe cation site is built by C99 and H141. E142 is a catalytic residue. A Fe cation-binding site is contributed by H145.

Belongs to the polypeptide deformylase family. Fe(2+) is required as a cofactor.

It catalyses the reaction N-terminal N-formyl-L-methionyl-[peptide] + H2O = N-terminal L-methionyl-[peptide] + formate. In terms of biological role, removes the formyl group from the N-terminal Met of newly synthesized proteins. Requires at least a dipeptide for an efficient rate of reaction. N-terminal L-methionine is a prerequisite for activity but the enzyme has broad specificity at other positions. The sequence is that of Peptide deformylase 2 from Bordetella bronchiseptica (strain ATCC BAA-588 / NCTC 13252 / RB50) (Alcaligenes bronchisepticus).